A 305-amino-acid polypeptide reads, in one-letter code: Serine/threonine-protein phosphatase 4 catalytic subunit (305 aa).

D52, H54, D80, and N112 together coordinate Mn(2+). H113 (proton donor) is an active-site residue. Positions 162 and 236 each coordinate Mn(2+).

The protein belongs to the PPP phosphatase family. PP-4 (PP-X) subfamily. Serine/threonine-protein phosphatase 4 (PP4) occurs in different assemblies of the catalytic and one or more regulatory subunits. Probably part of a PP4 complex containing ppp4c and ppp4r2. Interacts with smkA. Mn(2+) serves as cofactor.

The protein resides in the cytoplasm. It is found in the nucleus. The catalysed reaction is O-phospho-L-seryl-[protein] + H2O = L-seryl-[protein] + phosphate. The enzyme catalyses O-phospho-L-threonyl-[protein] + H2O = L-threonyl-[protein] + phosphate. In terms of biological role, required for development, chemotaxis and the expression of numerous genes. This is Serine/threonine-protein phosphatase 4 catalytic subunit (ppp4c) from Dictyostelium discoideum (Social amoeba).